The sequence spans 381 residues: 3-isopropylmalate dehydrogenase (381 aa).

Residues R104, R114, R142, and D232 each contribute to the substrate site. Mg(2+) contacts are provided by D232, D256, and D260. 290–302 (GSAPDIAGQDKAN) contributes to the NAD(+) binding site.

Belongs to the isocitrate and isopropylmalate dehydrogenases family. LeuB type 1 subfamily. Homodimer. It depends on Mg(2+) as a cofactor. Mn(2+) is required as a cofactor.

The protein localises to the cytoplasm. The catalysed reaction is (2R,3S)-3-isopropylmalate + NAD(+) = 4-methyl-2-oxopentanoate + CO2 + NADH. The protein operates within amino-acid biosynthesis; L-leucine biosynthesis; L-leucine from 3-methyl-2-oxobutanoate: step 3/4. Its function is as follows. Catalyzes the oxidation of 3-carboxy-2-hydroxy-4-methylpentanoate (3-isopropylmalate) to 3-carboxy-4-methyl-2-oxopentanoate. The product decarboxylates to 4-methyl-2 oxopentanoate. The chain is 3-isopropylmalate dehydrogenase from Synechococcus sp. (strain JA-3-3Ab) (Cyanobacteria bacterium Yellowstone A-Prime).